We begin with the raw amino-acid sequence, 750 residues long: MSTTIIGFPRLGEFRELKFTTEKYFRKEISADELLAAAKELRAKHWNIVKEKGISEIPSNDFSHYDNVLDAAFLFNVVPSSVRGLELTDLERYFALARGYQGEKGDVRALPMKKWFNTNYHYIVPKFEKETQVKLAGHKIFEEFAEAKELGLVTRPVVVGPFTLLQVSDFEDGVAPADFVDALATAYQEVFAKLAELGAKRIQLDEPSLVKDLSAEEKALFLDLYKKLLADKKGLEVLIQTYFGDVRDIYSDLVQLPVDAIGLDFVEGKKTLELVKGGFPADKTLYAGIVNGKNIWRNNYEKSLAVLEQIPAENIVLTSSCSLLHVPFTTANEEFEPAILNHFAFAVEKLDEIRDLDAIRNGQGAEALAANKELFATERVGENAELRARIAGLTDADYTRLPAFAEREAIQEEAFKLPALPTTTIGSFPQTKEVRAKRLAFRKGELSAEDYDKFLAEQIDEWIKWQEEVGFDVLVHGEFERNDMVEYFGQNLSGYLFSKNGWVQSYGMRGVKPPIIWGDVTRLNPITVKWSSYAQSRTEKPVKGMLTGPVTILNWSFPREDISIKDSTLQIALAIKDEVLDLEAAGVKIIQIDEAALREKLPLRRSDWYEDYLDWAIPAFRLVHSTVAPDTQIHTHMCYSEFTDIIPAIDNMDADVISFEASRSNLEILDELKAKNFQTEVGPGVYDIHSPRVPNEGEIDHTIEAILAKVPSKKVWINPDCGLKTRGIPETKASLVRLVEAAKAARQHLK.

5-methyltetrahydropteroyltri-L-glutamate-binding positions include 15-18 (RELK) and Lys-114. Residues 425–427 (IGS) and Glu-478 contribute to the L-homocysteine site. L-methionine contacts are provided by residues 425–427 (IGS) and Glu-478. Trp-555 lines the 5-methyltetrahydropteroyltri-L-glutamate pocket. Asp-593 provides a ligand contact to L-homocysteine. Asp-593 contacts L-methionine. Glu-599 contacts 5-methyltetrahydropteroyltri-L-glutamate. 3 residues coordinate Zn(2+): His-636, Cys-638, and Glu-660. His-689 functions as the Proton donor in the catalytic mechanism. A Zn(2+)-binding site is contributed by Cys-721.

Belongs to the vitamin-B12 independent methionine synthase family. It depends on Zn(2+) as a cofactor.

The catalysed reaction is 5-methyltetrahydropteroyltri-L-glutamate + L-homocysteine = tetrahydropteroyltri-L-glutamate + L-methionine. Its pathway is amino-acid biosynthesis; L-methionine biosynthesis via de novo pathway; L-methionine from L-homocysteine (MetE route): step 1/1. Functionally, catalyzes the transfer of a methyl group from 5-methyltetrahydrofolate to homocysteine resulting in methionine formation. This is 5-methyltetrahydropteroyltriglutamate--homocysteine methyltransferase from Streptococcus gordonii (strain Challis / ATCC 35105 / BCRC 15272 / CH1 / DL1 / V288).